The following is a 206-amino-acid chain: LOB domain-containing protein 2 (206 aa).

Positions 1 to 20 (MMQRNSNNTSITSNISNNSS) are disordered. The 101-residue stretch at 23–123 (QACASCKHQR…KSLVHNQPLI (101 aa)) folds into the LOB domain.

Belongs to the LOB domain-containing protein family.

The polypeptide is LOB domain-containing protein 2 (LBD2) (Arabidopsis thaliana (Mouse-ear cress)).